A 201-amino-acid chain; its full sequence is MTRTSPTLVLASTSRYRRELLARLRLPFEVLAPNVDETPLPGETRSATALRLSVLKAQAAAMTHRDALVIGSDQVLMLGTEQLGKPGDHERAFAQLKKMQGRAMVFHTALTLLNSRTGSVQTRDVPTVVHIRPLTDAQIEAYLKKEQPYDCAGSAKSEALGIALMERMESPDPTALIGLPLMALTEMLAQEGVDVLTWPAT.

The active-site Proton acceptor is Asp-73.

The protein belongs to the Maf family. YceF subfamily. A divalent metal cation serves as cofactor.

It is found in the cytoplasm. It catalyses the reaction N(7)-methyl-GTP + H2O = N(7)-methyl-GMP + diphosphate + H(+). In terms of biological role, nucleoside triphosphate pyrophosphatase that hydrolyzes 7-methyl-GTP (m(7)GTP). May have a dual role in cell division arrest and in preventing the incorporation of modified nucleotides into cellular nucleic acids. The sequence is that of 7-methyl-GTP pyrophosphatase from Thiobacillus denitrificans (strain ATCC 25259 / T1).